A 363-amino-acid chain; its full sequence is 3-isopropylmalate dehydrogenase (363 aa).

78-91 is an NAD(+) binding site; sequence GPKWENLPPESQPE. Substrate contacts are provided by arginine 99, arginine 109, arginine 138, and aspartate 227. Positions 227, 251, and 255 each coordinate Mg(2+). Position 285–297 (285–297) interacts with NAD(+); the sequence is GSAPDIAGKNIAN.

This sequence belongs to the isocitrate and isopropylmalate dehydrogenases family. LeuB type 1 subfamily. As to quaternary structure, homodimer. The cofactor is Mg(2+). Requires Mn(2+) as cofactor.

Its subcellular location is the cytoplasm. It carries out the reaction (2R,3S)-3-isopropylmalate + NAD(+) = 4-methyl-2-oxopentanoate + CO2 + NADH. Its pathway is amino-acid biosynthesis; L-leucine biosynthesis; L-leucine from 3-methyl-2-oxobutanoate: step 3/4. Catalyzes the oxidation of 3-carboxy-2-hydroxy-4-methylpentanoate (3-isopropylmalate) to 3-carboxy-4-methyl-2-oxopentanoate. The product decarboxylates to 4-methyl-2 oxopentanoate. This Salmonella paratyphi A (strain ATCC 9150 / SARB42) protein is 3-isopropylmalate dehydrogenase.